The sequence spans 310 residues: tRNA uridine(34) hydroxylase (310 aa).

Residues 127-225 (KNQNTIVIDT…YLDDIPKEKN (99 aa)) form the Rhodanese domain. Cysteine 185 acts as the Cysteine persulfide intermediate in catalysis.

This sequence belongs to the TrhO family.

It carries out the reaction uridine(34) in tRNA + AH2 + O2 = 5-hydroxyuridine(34) in tRNA + A + H2O. In terms of biological role, catalyzes oxygen-dependent 5-hydroxyuridine (ho5U) modification at position 34 in tRNAs. This is tRNA uridine(34) hydroxylase from Prochlorococcus marinus (strain MIT 9312).